Here is a 652-residue protein sequence, read N- to C-terminus: DNA ligase (652 aa).

NAD(+) contacts are provided by residues 29 to 33 (DAEYD), 78 to 79 (SL), and E107. K109 acts as the N6-AMP-lysine intermediate in catalysis. Residues R130, E164, K278, and K302 each contribute to the NAD(+) site. Residues C395, C398, C413, and C418 each contribute to the Zn(2+) site. A BRCT domain is found at 577–652 (ASDAALTGMT…IKDEAWLESL (76 aa)).

Belongs to the NAD-dependent DNA ligase family. LigA subfamily. It depends on Mg(2+) as a cofactor. Mn(2+) serves as cofactor.

It carries out the reaction NAD(+) + (deoxyribonucleotide)n-3'-hydroxyl + 5'-phospho-(deoxyribonucleotide)m = (deoxyribonucleotide)n+m + AMP + beta-nicotinamide D-nucleotide.. Functionally, DNA ligase that catalyzes the formation of phosphodiester linkages between 5'-phosphoryl and 3'-hydroxyl groups in double-stranded DNA using NAD as a coenzyme and as the energy source for the reaction. It is essential for DNA replication and repair of damaged DNA. This chain is DNA ligase, found in Streptococcus mutans serotype c (strain ATCC 700610 / UA159).